Consider the following 315-residue polypeptide: Thioredoxin reductase (315 aa).

34-41 (EGQKVGGQ) provides a ligand contact to FAD. Cys134 and Cys137 are oxidised to a cystine. 282–291 (DIRVKSLRQV) is an FAD binding site.

Belongs to the class-II pyridine nucleotide-disulfide oxidoreductase family. As to quaternary structure, homodimer. Requires FAD as cofactor.

It localises to the cytoplasm. The enzyme catalyses [thioredoxin]-dithiol + NADP(+) = [thioredoxin]-disulfide + NADPH + H(+). This Peptoclostridium acidaminophilum (Eubacterium acidaminophilum) protein is Thioredoxin reductase (trxB).